A 661-amino-acid polypeptide reads, in one-letter code: NUAK family SNF1-like kinase 1 (661 aa).

Met1 carries the N-acetylmethionine modification. Residues 1–24 (MEGAAAPVAGDRPDLGLGAPGSPR) are disordered. Ser22 is modified (phosphoserine). The region spanning 55–306 (YELQETLGKG…IEDIANHWWV (252 aa)) is the Protein kinase domain. ATP-binding positions include 61-69 (LGKGTYGKV) and Lys84. Asp178 functions as the Proton acceptor in the catalytic mechanism. Residue Thr211 is modified to Phosphothreonine; by LKB1. Disordered stretches follow at residues 345–421 (TEAK…EGVV) and 442–570 (LPSS…RPSS). A compositionally biased stretch (basic residues) spans 393–404 (SSKRPKGILKKR). Positions 399-402 (GILK) match the GILK motif motif. At Ser455 the chain carries Phosphoserine. Residues 518–529 (SCRRKGILKHSS) show a composition bias toward basic residues. Ser600 is subject to Phosphoserine; by PKB/AKT1.

Belongs to the protein kinase superfamily. CAMK Ser/Thr protein kinase family. SNF1 subfamily. As to quaternary structure, interacts (via GILK motif) with PPP1CB; the interaction is direct and bridges NUAK1 and PPP1R12A. Interacts with CDKN1A. Mg(2+) serves as cofactor. In terms of processing, ubiquitinated with 'Lys-29'- and 'Lys-33'-linked polyubiquitins which appear to impede LKB1-mediated phosphorylation. Deubiquitinated by USP9X. Post-translationally, phosphorylated at Thr-211 by STK11/LKB1 in complex with STE20-related adapter-alpha (STRADA) pseudo kinase and CAB39. Not dephosphorylated by the myosin PP1 complex when regulating its activity, due to the presence of PPP1R12A, which prevents myosin PP1 from dephosphorylating NUAK1. Phosphorylated by STK38L upon stimulation with IGF1. In terms of tissue distribution, expressed at high levels in heart and brain, and at lower levels in skeletal muscle, kidney, ovary, placenta, lung and liver. Highly up-regulated in colorectal cancer cell lines.

The protein resides in the nucleus. It is found in the cytoplasm. It catalyses the reaction L-seryl-[protein] + ATP = O-phospho-L-seryl-[protein] + ADP + H(+). It carries out the reaction L-threonyl-[protein] + ATP = O-phospho-L-threonyl-[protein] + ADP + H(+). Its activity is regulated as follows. Activated by phosphorylation on Thr-211. Activated by phosphorylation at Ser-600 AKT1 during glucose starvation; the relevance of such activation in normal cells is however unsure. In terms of biological role, serine/threonine-protein kinase involved in various processes such as cell adhesion, regulation of cell ploidy and senescence, cell proliferation and tumor progression. Phosphorylates ATM, CASP6, LATS1, PPP1R12A and p53/TP53. Acts as a regulator of cellular senescence and cellular ploidy by mediating phosphorylation of 'Ser-464' of LATS1, thereby controlling its stability. Controls cell adhesion by regulating activity of the myosin protein phosphatase 1 (PP1) complex. Acts by mediating phosphorylation of PPP1R12A subunit of myosin PP1: phosphorylated PPP1R12A then interacts with 14-3-3, leading to reduced dephosphorylation of myosin MLC2 by myosin PP1. May be involved in DNA damage response: phosphorylates p53/TP53 at 'Ser-15' and 'Ser-392' and is recruited to the CDKN1A/WAF1 promoter to participate in transcription activation by p53/TP53. May also act as a tumor malignancy-associated factor by promoting tumor invasion and metastasis under regulation and phosphorylation by AKT1. Suppresses Fas-induced apoptosis by mediating phosphorylation of CASP6, thereby suppressing the activation of the caspase and the subsequent cleavage of CFLAR. Regulates UV radiation-induced DNA damage response mediated by CDKN1A. In association with STK11, phosphorylates CDKN1A in response to UV radiation and contributes to its degradation which is necessary for optimal DNA repair. This Homo sapiens (Human) protein is NUAK family SNF1-like kinase 1 (NUAK1).